A 358-amino-acid chain; its full sequence is Prostaglandin E2 receptor EP2 subtype (358 aa).

Residues 1–23 (MGNASNDSQSEDCETRQWLPPGE) lie on the Extracellular side of the membrane. Residues N3 and N6 are each glycosylated (N-linked (GlcNAc...) asparagine). Residues 24–47 (SPAISSVMFSAGVLGNLIALALLA) form a helical membrane-spanning segment. Topologically, residues 48-65 (RRWRGDVGCSAGRRSSLS) are cytoplasmic. A helical transmembrane segment spans residues 66 to 91 (LFHVLVTELVFTDLLGTCLISPVVLA). The Extracellular portion of the chain corresponds to 92–111 (SYARNQTLVALAPESRACTY). N-linked (GlcNAc...) asparagine glycosylation occurs at N96. C109 and C187 are disulfide-bonded. Residues 112–132 (FAFAMTFFSLATMLMLFAMAL) form a helical membrane-spanning segment. Residues 133-151 (ERYLSIGHPYFYQRRVSRS) lie on the Cytoplasmic side of the membrane. A helical membrane pass occupies residues 152 to 176 (GGLAVLPVIYAVSLLFCSLPLLDYG). Topologically, residues 177-198 (QYVQYCPGTWCFIRHGRTAYLQ) are extracellular. The chain crosses the membrane as a helical span at residues 199–223 (LYATLLLLLIVSVLACNFSVILNLI). At 224-262 (RMHRRSRRSRCGPSLGSGRGGPGARRRGERVSMAEETDH) the chain is on the cytoplasmic side. The segment at 231–253 (RSRCGPSLGSGRGGPGARRRGER) is disordered. The chain crosses the membrane as a helical span at residues 263-286 (LILLAIMTITFAVCSLPFTIFAYM). The N-linked (GlcNAc...) asparagine glycan is linked to N287. At 287 to 299 (NETSSRKEKWDLQ) the chain is on the extracellular side. Residues 300–323 (ALRFLSINSIIDPWVFAILRPPVL) traverse the membrane as a helical segment. Residues 324–358 (RLMRSVLCCRISLRTQDATQTSCSTQSDASKQADL) lie on the Cytoplasmic side of the membrane.

The protein belongs to the G-protein coupled receptor 1 family. In terms of tissue distribution, placenta and lung.

The protein resides in the cell membrane. Its function is as follows. Receptor for prostaglandin E2 (PGE2). The activity of this receptor is mediated by G(s) proteins that stimulate adenylate cyclase. The subsequent raise in intracellular cAMP is responsible for the relaxing effect of this receptor on smooth muscle. The sequence is that of Prostaglandin E2 receptor EP2 subtype (PTGER2) from Homo sapiens (Human).